The primary structure comprises 307 residues: Acyl transferase (307 aa).

Catalysis depends on charge relay system residues Ser116, Asp213, and His243.

It belongs to the LuxD family.

It participates in lipid metabolism; fatty acid reduction for biolumincescence. Functionally, acyl transferase is part of the fatty acid reductase system required for aldehyde biosynthesis; it produces fatty acids for the luminescent reaction. The polypeptide is Acyl transferase (Aliivibrio fischeri (strain MJ11) (Vibrio fischeri)).